Consider the following 122-residue polypeptide: MSDARTRKIEARLKEIVGDEVASLSDPRLKGLVTVTGVRVSPNLSHATVFYSLLAGGDPEEAREGLQSAAGRIQAAVGAQTRLKRTPRLRFEPDPTVERVTRIQRTLREVSGEDGDGNGTQE.

Residues 95-111 (PTVERVTRIQRTLREVS) show a composition bias toward basic and acidic residues. Positions 95–122 (PTVERVTRIQRTLREVSGEDGDGNGTQE) are disordered.

The protein belongs to the RbfA family. In terms of assembly, monomer. Binds 30S ribosomal subunits, but not 50S ribosomal subunits or 70S ribosomes.

Its subcellular location is the cytoplasm. Its function is as follows. One of several proteins that assist in the late maturation steps of the functional core of the 30S ribosomal subunit. Associates with free 30S ribosomal subunits (but not with 30S subunits that are part of 70S ribosomes or polysomes). Required for efficient processing of 16S rRNA. May interact with the 5'-terminal helix region of 16S rRNA. This chain is Ribosome-binding factor A, found in Rubrobacter xylanophilus (strain DSM 9941 / JCM 11954 / NBRC 16129 / PRD-1).